A 1193-amino-acid chain; its full sequence is Tubulin monoglutamylase TTLL4 (1193 aa).

Disordered stretches follow at residues 1 to 37 (MASAGTEHYSIGLRRGNSFKQRHPSGTVSASPSEKPS) and 468 to 535 (VHLD…CSSL). Residues 24-34 (PSGTVSASPSE) are compositionally biased toward polar residues. Positions 472–482 (QPGKEPEEAKD) are enriched in basic and acidic residues. Positions 502–515 (EPEDTEDELGDGLE) are enriched in acidic residues. In terms of domain architecture, TTL spans 599–942 (RRLLRWKMST…VLPNMEDIIS (344 aa)). Ser-686 is subject to Phosphoserine. ATP contacts are provided by residues Lys-716, 722-723 (RG), 744-747 (QRYL), and 757-759 (KFD). Arg-722 provides a ligand contact to a protein. Residue Arg-783 coordinates L-glutamate. 804–805 (TN) is a binding site for ATP. Residues Tyr-806, Ser-807, and Lys-828 each contribute to the L-glutamate site. The Mg(2+) site is built by Asp-888, Glu-901, and Asn-903. The segment at 913–1027 (PLDISIKGQM…RGQFERIFPS (115 aa)) is c-MTBD region. Lys-919 contacts L-glutamate. The segment covering 943 to 960 (SSSSPSSSSGSSTSLPSS) has biased composition (low complexity). Disordered regions lie at residues 943-966 (SSSSPSSSSGSSTSLPSSPRDKCQ) and 1092-1193 (MTTS…AVSS). Polar residues-rich tracts occupy residues 1092 to 1102 (MTTSKGDGTPN) and 1131 to 1153 (SQAGLSPISRKTLSSRSNENTSK). Positions 1168-1182 (SGQSSRLSAASASQS) are enriched in low complexity. Polar residues predominate over residues 1183 to 1193 (VTDSRLTAVSS).

Belongs to the tubulin--tyrosine ligase family. Mg(2+) is required as a cofactor. As to expression, highly expressed in testis. Expressed in brain, heart, kidney, liver, lung, muscle and spleen. In the brain, expressed in ependymal cilia, the cortex and the striatum. Expressed in blastomere.

The protein resides in the cytoplasm. The protein localises to the cell projection. It is found in the cilium. It localises to the cytoskeleton. Its subcellular location is the cilium basal body. The catalysed reaction is L-glutamyl-[protein] + L-glutamate + ATP = gamma-L-glutamyl-L-glutamyl-[protein] + ADP + phosphate + H(+). Functionally, monoglutamylase which modifies both tubulin and non-tubulin proteins, adding a single glutamate on the gamma-carboxyl group of specific glutamate residues of target proteins. Involved in the side-chain initiation step of the polyglutamylation reaction but not in the elongation step. Preferentially modifies beta-tail tubulin over the alpha-tubulin. Monoglutamylates nucleosome assembly proteins NAP1L1 and NAP1L4. Monoglutamylates nucleotidyltransferase CGAS, leading to inhibition of CGAS catalytic activity, thereby preventing antiviral defense function. Involved in KLF4 glutamylation which impedes its ubiquitination, thereby leading to somatic cell reprogramming, pluripotency maintenance and embryogenesis. In Mus musculus (Mouse), this protein is Tubulin monoglutamylase TTLL4.